A 621-amino-acid chain; its full sequence is Kininogen-1 (621 aa).

The N-terminal stretch at 1–18 (MKLITILFLCSRLLPSLT) is a signal peptide. A Cystatin kininogen-type 1 domain is found at 27–131 (CNDQDVFKAV…IQTCLITPAE (105 aa)). Intrachain disulfides connect C27–C591, C82–C93, C106–C125, C141–C144, C205–C217, C228–C247, C263–C266, C327–C339, and C350–C369. N47 and N87 each carry an N-linked (GlcNAc...) asparagine glycan. T136 is a glycosylation site (O-linked (GalNAc...) threonine; partial). The 104-residue stretch at 150 to 253 (TKSPDLEPVL…SQKCDLYPVK (104 aa)) folds into the Cystatin kininogen-type 2 domain. N168 and N169 each carry an N-linked (GlcNAc...) asparagine glycan. N-linked (GlcNAc...) asparagine; partial glycosylation occurs at N197. A glycan (N-linked (GlcNAc...) asparagine) is linked at N204. The region spanning 272–375 (VDSPDLEEPL…TVNCQPLGQT (104 aa)) is the Cystatin kininogen-type 3 domain. A Phosphoserine modification is found at S331. Positions 396-497 (EGSTTVSLPH…GKNNGKHYDW (102 aa)) are disordered. S398 is a glycosylation site (O-linked (GalNAc...) serine). O-linked (GalNAc...) threonine glycosylation is found at T399 and T400. A glycan (O-linked (GalNAc...) serine) is linked at S406. Basic residues predominate over residues 444-492 (GHKHKHDQGHGHHGSHGLGHGHQKQHGLGHGHKHGHGHGKHKNKGKNNG). A glycan (O-linked (GalNAc...) serine) is linked at S512. Residues T520, T524, T536, T548, T553, and T570 are each glycosylated (O-linked (GalNAc...) threonine). O-linked (GalNAc...) serine glycosylation is present at S581.

In terms of processing, bradykinin is released from kininogen by plasma kallikrein. Phosphorylated by FAM20C in the extracellular medium. Post-translationally, bradykinin is inactivated by ACE, which removes the dipeptide Arg-Phe from its C-terminus. In terms of tissue distribution, plasma.

It localises to the secreted. It is found in the extracellular space. Its function is as follows. Kininogens are inhibitors of thiol proteases. HMW-kininogen plays an important role in blood coagulation by helping to position optimally prekallikrein and factor XI next to factor XII; HMW-kininogen inhibits the thrombin- and plasmin-induced aggregation of thrombocytes. LMW-kininogen inhibits the aggregation of thrombocytes. LMW-kininogen is in contrast to HMW-kininogen not involved in blood clotting. Functionally, the active peptide bradykinin is a potent vasodilatator that is released from HMW-kininogen shows a variety of physiological effects: (A) influence in smooth muscle contraction, (B) induction of hypotension, (C) natriuresis and diuresis, (D) decrease in blood glucose level, (E) it is a mediator of inflammation and causes (E1) increase in vascular permeability, (E2) stimulation of nociceptors (4E3) release of other mediators of inflammation (e.g. prostaglandins), (F) it has a cardioprotective effect (directly via bradykinin action, indirectly via endothelium-derived relaxing factor action). The protein is Kininogen-1 (KNG1) of Bos taurus (Bovine).